The following is a 575-amino-acid chain: Transmembrane protein 108 (575 aa).

Residues 9–29 traverse the membrane as a helical segment; the sequence is YCQLLSFLLILALTEALAFAI. The interaction with SH3GL2 stretch occupies residues 31–169; the sequence is EPSPRESLQV…TTTRRPPRPP (139 aa). Residues 65–398 are disordered; sequence MLTPNPDGPP…PSRVSESTIS (334 aa). The segment covering 74–87 has biased composition (low complexity); it reads PSQAAAPMATPTPR. Positions 95 to 115 are enriched in polar residues; the sequence is HTISTIAATVTAPHSESSLST. The span at 146 to 160 shows a compositional bias: low complexity; the sequence is PPGATSRPTTAPPRT. Residues 173 to 407 are interaction with DST (isoform 1); it reads RKGAGNSSRP…SGAKEETVAT (235 aa). Residues 244–271 show a composition bias toward polar residues; that stretch reads YSSSPQPQTVAATTVPSNTSWAPTTTSL. The span at 290–318 shows a compositional bias: low complexity; sequence TFTSQGGTPDATAASGAPVSPQAAPVPSQ. Positions 329 to 352 are enriched in polar residues; sequence PSHSDSWLTVTPGTSRPLSTSSGV. The segment covering 353–366 has biased composition (low complexity); sequence FTAATGPTPAAFDT. The segment covering 367–398 has biased composition (polar residues); sequence SVSAPSQGIPQGASTTPQAPTHPSRVSESTIS. A helical membrane pass occupies residues 469–489; the sequence is IAWVILAISVPISSCSVLLTV. The tract at residues 490-575 is interaction with CYFIP2; sequence CCMKRKKKTA…FVGNDQVSEI (86 aa).

As to quaternary structure, interacts with DST (isoform 1). Interacts with SH3GL2. Interacts (via N-terminus) with CYFIP1 and CYFIP2; the interactions associate TMEM108 with the WAVE1 complex. In terms of processing, glycosylated.

It localises to the membrane. Its subcellular location is the postsynaptic density. It is found in the endosome membrane. The protein resides in the cell projection. The protein localises to the axon. It localises to the dendrite. Its subcellular location is the early endosome. Its function is as follows. Transmembrane protein required for proper cognitive functions. Involved in the development of dentate gyrus (DG) neuron circuitry, is necessary for AMPA receptors surface expression and proper excitatory postsynaptic currents of DG granule neurons. Regulates the organization and stability of the microtubule network of sensory neurons to allow axonal transport. Through the interaction with DST, mediates the docking of the dynein/dynactin motor complex to vesicle cargos for retrograde axonal transport. In hippocampal neurons, required for BDNF-dependent dendrite outgrowth. Cooperates with SH3GL2 and recruits the WAVE1 complex to facilitate actin-dependent BDNF:NTRK2 early endocytic trafficking and mediate signaling from early endosomes. The protein is Transmembrane protein 108 of Homo sapiens (Human).